Here is a 355-residue protein sequence, read N- to C-terminus: Fructose-1,6-bisphosphatase class 1 (355 aa).

Glutamate 94, aspartate 116, leucine 118, and aspartate 119 together coordinate Mg(2+). Substrate contacts are provided by residues 119–122, asparagine 211, and 263–265; these read DGSS and YLY. Glutamate 283 lines the Mg(2+) pocket.

This sequence belongs to the FBPase class 1 family. In terms of assembly, homotetramer. Mg(2+) is required as a cofactor.

It is found in the cytoplasm. The enzyme catalyses beta-D-fructose 1,6-bisphosphate + H2O = beta-D-fructose 6-phosphate + phosphate. It functions in the pathway carbohydrate biosynthesis; Calvin cycle. The chain is Fructose-1,6-bisphosphatase class 1 from Rhodospirillum rubrum (strain ATCC 11170 / ATH 1.1.1 / DSM 467 / LMG 4362 / NCIMB 8255 / S1).